Reading from the N-terminus, the 254-residue chain is MWQLLLPTALLLLVSAGMRAEDLPKAVVFLEPQWYRVLEKDSVTLKCQGAYSPEDNSTRWFHNESLISSQTSSYFIAAARVNNSGEYRCQTSLSTLSDPVQLEVHIGWLLLQAPRWVFKEEDSIHLRCHSWKNTLLHKVTYLQNGKGRKYFHQNSDFYIPKATLKDSGSYFCRGLIGSKNVSSETVNITITQDLAVSSISSFFPPGYQVSFCLVMVLLFAVDTGLYFSVKKSIPSSTSDWKDHKFKWSKDPQDK.

The first 20 residues, 1 to 20 (MWQLLLPTALLLLVSAGMRA), serve as a signal peptide directing secretion. Ig-like C2-type domains follow at residues 24–105 (PKAV…LEVH) and 107–189 (GWLL…VNIT). 2 disulfides stabilise this stretch: Cys47–Cys89 and Cys128–Cys172. Asn187 is a glycosylation site (N-linked (GlcNAc...) asparagine). Residues 207–229 (YQVSFCLVMVLLFAVDTGLYFSV) form a helical membrane-spanning segment. The segment at 234 to 254 (PSSTSDWKDHKFKWSKDPQDK) is disordered. Over residues 239–254 (DWKDHKFKWSKDPQDK) the composition is skewed to basic and acidic residues.

In terms of assembly, forms a heterooligomeric complex with ITAM-containing signaling subunits, either a homodimer of CD247, a homodimer of FCER1G or a heterodimer of CD247 and FCER1G, to form a functional receptor complex. Interacts (via transmembrane domain) with signaling subunits; this interaction is a prerequisite for receptor complex expression on the cell surface and intracellular signal transduction. Binds the Fc region of antigen-complexed IgG with a preference for IgG1 and IgG3 isotypes. Interacts with CD2; this interaction is involved in NK cell activation and cytotoxicity. Interacts with S100A4; this interaction inhibits PKC-dependent phosphorylation of FCGR3A. Glycosylated. Glycosylation plays an inhibitory role in the interaction with IgG1 and IgG2. Post-translationally, undergoes rapid ectodomain shedding upon NK cell stimulation. The soluble form is produced by a proteolytic cleavage mediated by ADAM17. Repeated stimulation causes receptor shedding, a mechanism that allows for increased NK cell motility and detachment from opsonized target cells while avoiding activation-induced NK cell apoptosis. As to expression, lymphocytes and monocytes.

Its subcellular location is the cell membrane. The protein localises to the secreted. In terms of biological role, receptor for the invariable Fc fragment of immunoglobulin gamma (IgG). Optimally activated upon binding of clustered antigen-IgG complexes displayed on cell surfaces, triggers lysis of antibody-coated cells, a process known as antibody-dependent cellular cytotoxicity (ADCC). Does not bind free monomeric IgG, thus avoiding inappropriate effector cell activation in the absence of antigenic trigger. Mediates IgG effector functions on natural killer (NK) cells. Binds antigen-IgG complexes generated upon infection and triggers NK cell-dependent cytokine production and degranulation to limit viral load and propagation. Involved in the generation of memory-like adaptive NK cells capable to produce high amounts of IFNG and to efficiently eliminate virus-infected cells via ADCC. Regulates NK cell survival and proliferation, in particular by preventing NK cell progenitor apoptosis. Fc-binding subunit that associates with CD247 and/or FCER1G adapters to form functional signaling complexes. Following the engagement of antigen-IgG complexes, triggers phosphorylation of immunoreceptor tyrosine-based activation motif (ITAM)-containing adapters with subsequent activation of phosphatidylinositol 3-kinase signaling and sustained elevation of intracellular calcium that ultimately drive NK cell activation. The ITAM-dependent signaling coupled to receptor phosphorylation by PKC mediates robust intracellular calcium flux that leads to production of pro-inflammatory cytokines, whereas in the absence of receptor phosphorylation it mainly activates phosphatidylinositol 3-kinase signaling leading to cell degranulation. Costimulates NK cells and trigger lysis of target cells independently of IgG binding. Mediates the antitumor activities of therapeutic antibodies. Upon ligation on monocytes triggers TNFA-dependent ADCC of IgG-coated tumor cells. Mediates enhanced ADCC in response to afucosylated IgGs. This Papio anubis (Olive baboon) protein is Low affinity immunoglobulin gamma Fc region receptor III-A (FCGR3A).